Consider the following 247-residue polypeptide: tRNA uridine(34) hydroxylase (247 aa).

Positions 124–218 (TKQDVIVIDT…YLEDTQNKNN (95 aa)) constitute a Rhodanese domain. The active-site Cysteine persulfide intermediate is Cys178.

It belongs to the TrhO family.

The enzyme catalyses uridine(34) in tRNA + AH2 + O2 = 5-hydroxyuridine(34) in tRNA + A + H2O. Catalyzes oxygen-dependent 5-hydroxyuridine (ho5U) modification at position 34 in tRNAs. The polypeptide is tRNA uridine(34) hydroxylase (Rickettsia massiliae (strain Mtu5)).